An 88-amino-acid polypeptide reads, in one-letter code: YcgL domain-containing protein HI_1446 (88 aa).

One can recognise a YcgL domain in the interval 1-85 (MLCAIYKSKK…QDDGLFNSLS (85 aa)).

In Haemophilus influenzae (strain ATCC 51907 / DSM 11121 / KW20 / Rd), this protein is YcgL domain-containing protein HI_1446.